The following is a 344-amino-acid chain: Acetylpolyamine amidohydrolase 2 (344 aa).

H159 functions as the Proton donor/acceptor in the catalytic mechanism. D195, H197, and D284 together coordinate Zn(2+).

The protein belongs to the histone deacetylase family. As to quaternary structure, homodimer. Zn(2+) is required as a cofactor.

It carries out the reaction N-acetylputrescine + H2O = putrescine + acetate. The catalysed reaction is N-acetylcadaverine + H2O = cadaverine + acetate. It participates in amine and polyamine metabolism. In terms of biological role, catalyzes the deacetylation of acetylated polyamines such as N-acetylputrescine and N-acetylcadaverine. Plays an important role in the metabolism of acetylated polyamines in P.aeruginosa. Is involved in the degradation pathways of N-acetylputrescine and N-acetylcadaverine, that allow P.aeruginosa to utilize these acetylpolyamines as a carbon source under glucose starvation. Shows nearly no activity against N(1)-acetylspermine and N(1)-acetylspermidine. Can also hydrolyze artificial trifluoroacetylated lysine-derivative, and to a lesser extent, acetylated lysine-derivative. The sequence is that of Acetylpolyamine amidohydrolase 2 from Pseudomonas aeruginosa (strain ATCC 15692 / DSM 22644 / CIP 104116 / JCM 14847 / LMG 12228 / 1C / PRS 101 / PAO1).